Consider the following 304-residue polypeptide: D-alanine--D-alanine ligase (304 aa).

An ATP-grasp domain is found at 101-298 (KKIFIKNKIL…FIKLIEWILK (198 aa)). 131 to 184 (EKNLKFPVVVKPINEGSSVHVYICDKTNILKNLKVLKSYNEILIEEFIPGREIQ) is an ATP binding site. Mg(2+) is bound by residues Asp-253, Glu-265, and Asn-267.

It belongs to the D-alanine--D-alanine ligase family. It depends on Mg(2+) as a cofactor. Mn(2+) serves as cofactor.

The protein localises to the cytoplasm. It catalyses the reaction 2 D-alanine + ATP = D-alanyl-D-alanine + ADP + phosphate + H(+). It participates in cell wall biogenesis; peptidoglycan biosynthesis. In terms of biological role, cell wall formation. This Pelagibacter ubique (strain HTCC1062) protein is D-alanine--D-alanine ligase.